The sequence spans 137 residues: Glutamate mutase sigma subunit (137 aa).

In terms of domain architecture, B12-binding spans 3–137 (KKTIVLGVIG…ADLKEDLNIK (135 aa)). Adenosylcob(III)alamin contacts are provided by residues 13-17 (SDCHA), histidine 16, 61-63 (SSL), and 93-97 (NIVVG).

Belongs to the methylaspartate mutase GlmS subunit family. In terms of assembly, heterotetramer composed of 2 epsilon subunits (GlmE) and 2 sigma subunits (GlmS). GlmE exists as a homodimer and GlmS as a monomer. Adenosylcob(III)alamin serves as cofactor.

It carries out the reaction (2S,3S)-3-methyl-L-aspartate = L-glutamate. The protein operates within amino-acid degradation; L-glutamate degradation via mesaconate pathway; acetate and pyruvate from L-glutamate: step 1/4. Its function is as follows. Catalyzes the carbon skeleton rearrangement of L-glutamate to L-threo-3-methylaspartate ((2S,3S)-3-methylaspartate). The sequence is that of Glutamate mutase sigma subunit from Clostridium tetani (strain Massachusetts / E88).